The following is a 153-amino-acid chain: 6,7-dimethyl-8-ribityllumazine synthase (153 aa).

5-amino-6-(D-ribitylamino)uracil-binding positions include Phe22, 56–58, and 80–82; these read AFE and TVI. Residue 85–86 coordinates (2S)-2-hydroxy-3-oxobutyl phosphate; it reads ST. His88 (proton donor) is an active-site residue. Residue Phe113 participates in 5-amino-6-(D-ribitylamino)uracil binding. Arg127 provides a ligand contact to (2S)-2-hydroxy-3-oxobutyl phosphate.

Belongs to the DMRL synthase family. Forms an icosahedral capsid composed of 60 subunits, arranged as a dodecamer of pentamers.

It carries out the reaction (2S)-2-hydroxy-3-oxobutyl phosphate + 5-amino-6-(D-ribitylamino)uracil = 6,7-dimethyl-8-(1-D-ribityl)lumazine + phosphate + 2 H2O + H(+). Its pathway is cofactor biosynthesis; riboflavin biosynthesis; riboflavin from 2-hydroxy-3-oxobutyl phosphate and 5-amino-6-(D-ribitylamino)uracil: step 1/2. Its function is as follows. Catalyzes the formation of 6,7-dimethyl-8-ribityllumazine by condensation of 5-amino-6-(D-ribitylamino)uracil with 3,4-dihydroxy-2-butanone 4-phosphate. This is the penultimate step in the biosynthesis of riboflavin. The chain is 6,7-dimethyl-8-ribityllumazine synthase from Actinobacillus pleuropneumoniae serotype 3 (strain JL03).